Here is a 353-residue protein sequence, read N- to C-terminus: Putative glycosyltransferase TagX (353 aa).

It belongs to the glycosyltransferase 2 family.

The protein is Putative glycosyltransferase TagX (tagX) of Staphylococcus aureus (strain COL).